A 351-amino-acid polypeptide reads, in one-letter code: Anthranilate phosphoribosyltransferase (351 aa).

Residues glycine 80, glycine 83–aspartate 84, threonine 88, asparagine 90–threonine 93, lysine 108–serine 116, and serine 120 contribute to the 5-phospho-alpha-D-ribose 1-diphosphate site. Glycine 80 serves as a coordination point for anthranilate. Serine 92 contributes to the Mg(2+) binding site. Residue asparagine 111 participates in anthranilate binding. Arginine 166 is a binding site for anthranilate. Mg(2+)-binding residues include aspartate 229 and glutamate 230.

Belongs to the anthranilate phosphoribosyltransferase family. Homodimer. Mg(2+) serves as cofactor.

It carries out the reaction N-(5-phospho-beta-D-ribosyl)anthranilate + diphosphate = 5-phospho-alpha-D-ribose 1-diphosphate + anthranilate. It functions in the pathway amino-acid biosynthesis; L-tryptophan biosynthesis; L-tryptophan from chorismate: step 2/5. In terms of biological role, catalyzes the transfer of the phosphoribosyl group of 5-phosphorylribose-1-pyrophosphate (PRPP) to anthranilate to yield N-(5'-phosphoribosyl)-anthranilate (PRA). This chain is Anthranilate phosphoribosyltransferase, found in Chlorobium chlorochromatii (strain CaD3).